Consider the following 122-residue polypeptide: uncharacterized protein (122 aa).

3 helical membrane passes run 33 to 53 (ALGL…LTIP), 58 to 78 (VLGV…LLRW), and 97 to 117 (PGYL…LVVA).

It to E.coli YidH.

The protein localises to the cell membrane. This is an uncharacterized protein from Mycobacterium tuberculosis (strain CDC 1551 / Oshkosh).